The sequence spans 913 residues: MKKAIKLNLITLGLINTIGMTITQAQAEETLGQIDVVEKVISNDKKPFTEAKAKSTRENVFKETQTIDQVIRSIPGAFTQQDKGSGVVSVNIRGENGLGRVNTMVDGVTQTFYSTALDSGQSGGSSQFGAAIDPNFIAGVDVNKSNFSGASGINALAGSANFRTLGVNDVITDDKPFGIILKGMTGSNATKSNFMTMAAGRKWLDNGGYVGVVYGYSQREVSQDYRIGGGERLASLGQDILAKEKEAYFRNAGYILNPEGQWTPDLSKKHWSCNKPDYQKNGDCSYYRIGSAAKTRREILQELLTNGKKPKDIEKLQKGNDGIEETDKSFERNKDQYSVAPIEPGSLQSRSRSHLLKFEYGDDHQNLGAQLRTLDNKIGSRKIENRNYQVNYNFNNNSYLDLNLMAAHNIGKTIYPKGGFFAGWQVADKLITKNVANIVDINNSHTFLLPKEIDLKTTLGFNYFTNEYSKNRFPEELSLFYNDASHDQGLYSHSKRGRYSGTKSLLPQRSVILQPSGKQKFKTVYFDTALSKGIYHLNYSVNFTHYAFNGEYVGYENTAGQQINEPILHKSGHKKAFNHSATLSAELSDYFMPFFTYSRTHRMPNIQEMFFSQVSNAGVNTALKPEQSDTYQLGFNTYKKGLFTQDDVLGVKLVGYRSFIKNYIHNVYGVWWRDGMPTWAESNGFKYTIAHQNYKPIVKKSGVELEINYDMGRFFANVSYAYQRTNQPTNYADASPRPNNASQEDILKQGYGLSRVSMLPKDYGRLELGTRWFDQKLTLGLAARYYGKSKRATIEEEYINGSRFKKNTLRRENYYAVKKTEDIKKQPIILDLHVSYEPIKDLIIKAEVQNLLDKRYVDPLDAGNDAASQRYYSSLNNSIECAQDSSACGGSDKTVLYNFARGRTYILSLNYKF.

The first 27 residues, 1 to 27, serve as a signal peptide directing secretion; it reads MKKAIKLNLITLGLINTIGMTITQAQA. In terms of domain architecture, TBDR plug spans 42–165; that stretch reads SNDKKPFTEA…LAGSANFRTL (124 aa). In terms of domain architecture, TBDR beta-barrel spans 176 to 913; it reads PFGIILKGMT…TYILSLNYKF (738 aa). Positions 896 to 913 match the TonB C-terminal box motif; it reads LYNFARGRTYILSLNYKF.

The protein belongs to the TonB-dependent receptor family.

It is found in the cell outer membrane. Probable receptor, TonB-dependent. The sequence is that of Probable TonB-dependent receptor HI_1217 from Haemophilus influenzae (strain ATCC 51907 / DSM 11121 / KW20 / Rd).